We begin with the raw amino-acid sequence, 160 residues long: Eukaryotic translation initiation factor 5A-1/2 (160 aa).

Basic and acidic residues predominate over residues 1–12 (MSDEEHHFESKA). The interval 1 to 21 (MSDEEHHFESKADAGASKTYP) is disordered. Position 52 is a hypusine (Lys52).

It belongs to the eIF-5A family. Lys-52 undergoes hypusination, a unique post-translational modification that consists in the addition of a butylamino group from spermidine to lysine side chain, leading to the formation of the unusual amino acid hypusine. eIF-5As are the only known proteins to undergo this modification, which is essential for their function.

Translation factor that promotes translation elongation and termination, particularly upon ribosome stalling at specific amino acid sequence contexts. Binds between the exit (E) and peptidyl (P) site of the ribosome and promotes rescue of stalled ribosome: specifically required for efficient translation of polyproline-containing peptides as well as other motifs that stall the ribosome. Acts as a ribosome quality control (RQC) cofactor by joining the RQC complex to facilitate peptidyl transfer during CAT tailing step. The chain is Eukaryotic translation initiation factor 5A-1/2 (EIF5A1) from Solanum tuberosum (Potato).